The sequence spans 617 residues: Isopropyl malate synthase gloH (617 aa).

Residues 47-325 (PIWLSTDLRD…ETGLDFSDLL (279 aa)) form the Pyruvate carboxyltransferase domain.

Belongs to the alpha-IPM synthase/homocitrate synthase family. LeuA type 2 subfamily.

The catalysed reaction is 3-methyl-2-oxobutanoate + acetyl-CoA + H2O = (2S)-2-isopropylmalate + CoA + H(+). The protein operates within mycotoxin biosynthesis. In terms of biological role, 2-isopropylmalate synthase; part of the gene cluster that mediates the biosynthesis of pneumocandins, lipohexapeptides of the echinocandin family that prevent fungal cell wall formation by non-competitive inhibition of beta-1,3-glucan synthase. The 10,12-dimethylmyristoyl side chain is synthesized by the reducing polyketide synthase gloL/GLPKS4. The thioesterase gloN/GLHYD exclusively interacts with gloL/GLPKS4 to maintain turnover of the polyketide side chain. The 10R,12S-dimethylmyristic acid is then transferred to the first thiolation domain of the nonribosomal peptide synthetase gloA/GLNRPS4 by the acyl-AMP ligase gloD/GLligase, followed by its acylation to L-ornithine to trigger elongation of the cyclic hexapeptide. L-ornithine, 4R-hydroxyl-L-proline (generated from L-proline by the dioxygenase gloF/GLOXY2), 3S-hydroxyl-L-homotyrosine (generated by gloG/GLHtyB, gloH/GLHtyA, gloI/GLHtyC, gloJ/GLHtyD and hydroxylated at C-3 by the dioxygenase gloM/GLOXY1), 3R-hydroxyl-L-glutamine (generated from L-glutamine probably by the dioxygenase gloE/GLOXY3) and 3S-hydroxyl-L-proline (generated from L-proline by the dioxygenase gloF/GLOXY2 to yield pneumocandin B0), or 3S-hydroxyl-4S-methyl-L-proline (generated from L-leucine by the dioxygenase gloC/GLOXY4 to yield pneumocandin A0) are sequentially added to the growing chain. The last C domain of gloA/GLNRPS4 is proposed to be responsible for cyclization by condensation to form the peptide bond between L-ornithine and 3S-hydroxyl-4S-methyl-L-proline (for pneumocandin A0) or 3S-hydroxyl-L-proline (for pneumocandin B0). Finally, the subsequent C-4 hydroxylation of 3S-hydroxyl-L-homotyrosine and L-ornithine dihydroxylation at C-4 and C-5 are performed by the cytochrome P450 monooxygenases gloP/GLP450-1 and gloO/GLP450-2, respectively. The chain is Isopropyl malate synthase gloH from Glarea lozoyensis (strain ATCC 20868 / MF5171).